The sequence spans 178 residues: Crossover junction endodeoxyribonuclease RuvC (178 aa).

Residues D20, E80, and D154 contribute to the active site. Residues D20, E80, and D154 each contribute to the Mg(2+) site.

It belongs to the RuvC family. As to quaternary structure, homodimer which binds Holliday junction (HJ) DNA. The HJ becomes 2-fold symmetrical on binding to RuvC with unstacked arms; it has a different conformation from HJ DNA in complex with RuvA. In the full resolvosome a probable DNA-RuvA(4)-RuvB(12)-RuvC(2) complex forms which resolves the HJ. Mg(2+) serves as cofactor.

The protein resides in the cytoplasm. It carries out the reaction Endonucleolytic cleavage at a junction such as a reciprocal single-stranded crossover between two homologous DNA duplexes (Holliday junction).. Its function is as follows. The RuvA-RuvB-RuvC complex processes Holliday junction (HJ) DNA during genetic recombination and DNA repair. Endonuclease that resolves HJ intermediates. Cleaves cruciform DNA by making single-stranded nicks across the HJ at symmetrical positions within the homologous arms, yielding a 5'-phosphate and a 3'-hydroxyl group; requires a central core of homology in the junction. The consensus cleavage sequence is 5'-(A/T)TT(C/G)-3'. Cleavage occurs on the 3'-side of the TT dinucleotide at the point of strand exchange. HJ branch migration catalyzed by RuvA-RuvB allows RuvC to scan DNA until it finds its consensus sequence, where it cleaves and resolves the cruciform DNA. The sequence is that of Crossover junction endodeoxyribonuclease RuvC from Rhodopirellula baltica (strain DSM 10527 / NCIMB 13988 / SH1).